A 179-amino-acid polypeptide reads, in one-letter code: Inner membrane-spanning protein YciB (179 aa).

5 consecutive transmembrane segments (helical) span residues 3–23 (FLYD…FGIY), 49–69 (NALI…LWLQ), 76–96 (WKPT…QWLF), 119–139 (LNLA…YVAY), and 149–169 (FKLF…TLLL).

Belongs to the YciB family.

It localises to the cell inner membrane. In terms of biological role, plays a role in cell envelope biogenesis, maintenance of cell envelope integrity and membrane homeostasis. The protein is Inner membrane-spanning protein YciB of Methylobacillus flagellatus (strain ATCC 51484 / DSM 6875 / VKM B-1610 / KT).